A 227-amino-acid polypeptide reads, in one-letter code: Cytidylate kinase (227 aa).

12 to 20 provides a ligand contact to ATP; it reads GPSGVGKGT.

The protein belongs to the cytidylate kinase family. Type 1 subfamily.

It localises to the cytoplasm. The catalysed reaction is CMP + ATP = CDP + ADP. The enzyme catalyses dCMP + ATP = dCDP + ADP. The chain is Cytidylate kinase from Shewanella denitrificans (strain OS217 / ATCC BAA-1090 / DSM 15013).